The following is a 323-amino-acid chain: tRNA-modifying protein YgfZ (323 aa).

Tryptophan 29 and tryptophan 182 together coordinate folate.

This sequence belongs to the tRNA-modifying YgfZ family.

Its subcellular location is the cytoplasm. Folate-binding protein involved in regulating the level of ATP-DnaA and in the modification of some tRNAs. It is probably a key factor in regulatory networks that act via tRNA modification, such as initiation of chromosomal replication. The chain is tRNA-modifying protein YgfZ from Vibrio cholerae serotype O1 (strain M66-2).